The following is an 845-amino-acid chain: Proto-oncogene vav (845 aa).

The Calponin-homology (CH) domain occupies 1–119 (MELWRQCTHW…YTLSALSWTP (119 aa)). The DH domain maps to 194-373 (KRCCCLREIQ…RDLAQCVNEV (180 aa)). The PH domain occupies 402–504 (RPKIDGELKI…WMEQFEMAIS (103 aa)). The Phorbol-ester/DAG-type zinc finger occupies 515-564 (GHDFQMFSFEETTSCKACQMLLRGTFYQGYRCYRCRAPAHKECLGRVPPC). The 69-residue stretch at 592–660 (LGLPKMEVFQ…PCNRVHPYVH (69 aa)) folds into the SH3 1 domain. Positions 671–765 (WYAGPMERAG…SLDTTLQFPY (95 aa)) constitute an SH2 domain. Residues 782-842 (KYFGTAKARY…PSNYVEEDYS (61 aa)) enclose the SH3 2 domain. Phosphotyrosine occurs at positions 826 and 844.

Interacts with SHB. Interacts with APS, DOCK2, GRB2, GRB3, DOCK2, SLA, TEC and ZNF655/VIK. Interacts with SIAH2; without leading to its degradation. Associates with BLNK, PLCG1, GRB2 and NCK1 in a B-cell antigen receptor-dependent fashion. Interacts with CBLB; which inhibits tyrosine phosphorylation and down-regulates activity. May interact with CCPG1. Interacts with CLNK. Interacts with THEMIS2. Interacts with NEK3 and this interaction is prolactin-dependent. Interacts with ITK. Interacts with PTK2B/PYK2. Interacts with HCK. Interacts with PTK2B/PYK2. Interacts (via SH2 domain) with SYK. Interacts with ANKRD54. Interacts with CD6. Interacts with isoform 2 of CRACR2A. Interacts with LCP2; this interaction plays a role in TCR-mediated cytokine production. Post-translationally, phosphorylated by FYN. Phosphorylated on tyrosine residues by HCK in response to IFNG and bacterial lipopolysaccharide (LPS). Widely expressed in hematopoietic cells but not in other cell types. Found in the spleen and lung.

Functionally, couples tyrosine kinase signals with the activation of the Rho/Rac GTPases, thus leading to cell differentiation and/or proliferation. The sequence is that of Proto-oncogene vav (Vav1) from Mus musculus (Mouse).